Here is an 851-residue protein sequence, read N- to C-terminus: Venom phosphodiesterase 1 (851 aa).

The first 23 residues, Met1–Gly23, serve as a signal peptide directing secretion. SMB domains are found at residues Pro30–Thr73 and Gln74–Ser118. Disulfide bonds link Cys34-Cys38, Cys34-Cys51, Cys38-Cys69, Cys49-Cys51, Cys49-Cys62, Cys55-Cys61, Cys62-Cys69, Cys78-Cys83, Cys78-Cys95, Cys83-Cys113, Cys93-Cys95, Cys93-Cys106, Cys99-Cys105, Cys106-Cys113, Cys124-Cys170, and Cys132-Cys344. Asn39 carries an N-linked (GlcNAc...) asparagine glycan. The Cell attachment site motif lies at Arg58 to Ala60. Residues Asp147 and Thr185 each contribute to the a divalent metal cation site. Thr185 serves as the catalytic AMP-threonine intermediate. Residues Asn216, Asn259, and Asn270 are each glycosylated (N-linked (GlcNAc...) asparagine). Position 271 (Lys271) interacts with AMP. A divalent metal cation contacts are provided by Asp305, His309, Asp352, and His353. Residue His309 coordinates AMP. Cystine bridges form between Cys360–Cys457, Cys408–Cys793, Cys541–Cys599, Cys554–Cys654, Cys556–Cys639, and Cys762–Cys772. Asn405 carries N-linked (GlcNAc...) asparagine glycosylation. His462 lines the a divalent metal cation pocket. N-linked (GlcNAc...) asparagine glycans are attached at residues Asn512, Asn594, Asn674, and Asn745.

It belongs to the nucleotide pyrophosphatase/phosphodiesterase family. As to quaternary structure, monomer cleaved in two subunits; disulfide-linked. Is synthesized as a single-chain protein and is subsequently cleaved to form a two-subunit protein held together with disulfide bonds. It depends on a divalent metal cation as a cofactor. As to expression, expressed by venom gland.

It localises to the secreted. The catalysed reaction is ADP + H2O = AMP + phosphate + H(+). In terms of biological role, hydrolyzes ADP with high activity. Shows weak or no activity on 5'-AMP, 5'-GMP, 3'-AMP, ATP, cAMP, and cGMP. Is devoid of monophosphatase and proteinase activities. Dose-dependently inhibits platelet aggregation induced by ADP and collagen. The polypeptide is Venom phosphodiesterase 1 (Crotalus adamanteus (Eastern diamondback rattlesnake)).